The chain runs to 125 residues: MVGKHCILELYDCDHAKLNDEAFLRTTITTAAKRAGATLLNLITHRFEPQGVTGLALLAESHLSIHTWPENGYAAVDVFTCGDQTMPEQACELLRQELGAKNHALKSFQRETPAALATAVRHPKA.

Serine 61 (schiff-base intermediate with substrate; via pyruvic acid) is an active-site residue. Serine 61 carries the post-translational modification Pyruvic acid (Ser); by autocatalysis. The Proton acceptor; for processing activity role is filled by histidine 66. Cysteine 81 (proton donor; for catalytic activity) is an active-site residue.

This sequence belongs to the prokaryotic AdoMetDC family. Type 1 subfamily. As to quaternary structure, heterotetramer of two alpha and two beta chains arranged as a dimer of alpha/beta heterodimers. Requires pyruvate as cofactor. Post-translationally, is synthesized initially as an inactive proenzyme. Formation of the active enzyme involves a self-maturation process in which the active site pyruvoyl group is generated from an internal serine residue via an autocatalytic post-translational modification. Two non-identical subunits are generated from the proenzyme in this reaction, and the pyruvate is formed at the N-terminus of the alpha chain, which is derived from the carboxyl end of the proenzyme. The post-translation cleavage follows an unusual pathway, termed non-hydrolytic serinolysis, in which the side chain hydroxyl group of the serine supplies its oxygen atom to form the C-terminus of the beta chain, while the remainder of the serine residue undergoes an oxidative deamination to produce ammonia and the pyruvoyl group blocking the N-terminus of the alpha chain.

The catalysed reaction is S-adenosyl-L-methionine + H(+) = S-adenosyl 3-(methylsulfanyl)propylamine + CO2. It participates in amine and polyamine biosynthesis; S-adenosylmethioninamine biosynthesis; S-adenosylmethioninamine from S-adenosyl-L-methionine: step 1/1. Catalyzes the decarboxylation of S-adenosylmethionine to S-adenosylmethioninamine (dcAdoMet), the propylamine donor required for the synthesis of the polyamines spermine and spermidine from the diamine putrescine. The chain is S-adenosylmethionine decarboxylase proenzyme from Prochlorococcus marinus (strain MIT 9313).